The sequence spans 313 residues: Glutaminase (313 aa).

Positions 73, 123, 167, 174, 198, 249, and 267 each coordinate substrate.

This sequence belongs to the glutaminase family. In terms of assembly, homotetramer.

The enzyme catalyses L-glutamine + H2O = L-glutamate + NH4(+). The polypeptide is Glutaminase (Streptomyces avermitilis (strain ATCC 31267 / DSM 46492 / JCM 5070 / NBRC 14893 / NCIMB 12804 / NRRL 8165 / MA-4680)).